Reading from the N-terminus, the 225-residue chain is Octanoyltransferase (225 aa).

Residues glutamate 31–aspartate 214 enclose the BPL/LPL catalytic domain. Substrate-binding positions include arginine 70–histidine 77, serine 137–glycine 139, and glycine 150–alanine 152. Cysteine 168 functions as the Acyl-thioester intermediate in the catalytic mechanism.

This sequence belongs to the LipB family.

It is found in the cytoplasm. The enzyme catalyses octanoyl-[ACP] + L-lysyl-[protein] = N(6)-octanoyl-L-lysyl-[protein] + holo-[ACP] + H(+). Its pathway is protein modification; protein lipoylation via endogenous pathway; protein N(6)-(lipoyl)lysine from octanoyl-[acyl-carrier-protein]: step 1/2. In terms of biological role, catalyzes the transfer of endogenously produced octanoic acid from octanoyl-acyl-carrier-protein onto the lipoyl domains of lipoate-dependent enzymes. Lipoyl-ACP can also act as a substrate although octanoyl-ACP is likely to be the physiological substrate. The protein is Octanoyltransferase of Aliivibrio fischeri (strain ATCC 700601 / ES114) (Vibrio fischeri).